The chain runs to 31 residues: RISSSVIAHKTQLDSGKREVYSSHMQLGGPK.

Residues 1-31 (RISSSVIAHKTQLDSGKREVYSSHMQLGGPK) are disordered. Over residues 11–21 (TQLDSGKREVY) the composition is skewed to basic and acidic residues.

It catalyses the reaction hydrogencarbonate + acetyl-CoA + ATP = malonyl-CoA + ADP + phosphate + H(+). The protein operates within lipid metabolism; malonyl-CoA biosynthesis; malonyl-CoA from acetyl-CoA: step 1/1. The sequence is that of Acetyl-CoA carboxylase from Catharanthus roseus (Madagascar periwinkle).